Consider the following 433-residue polypeptide: Enolase (433 aa).

Position 167 (Q167) interacts with (2R)-2-phosphoglycerate. The active-site Proton donor is E209. Mg(2+) is bound by residues D246, E291, and D318. (2R)-2-phosphoglycerate-binding residues include K343, R372, S373, and K394. The active-site Proton acceptor is the K343.

This sequence belongs to the enolase family. As to quaternary structure, component of the RNA degradosome, a multiprotein complex involved in RNA processing and mRNA degradation. Mg(2+) is required as a cofactor.

The protein localises to the cytoplasm. It localises to the secreted. The protein resides in the cell surface. It carries out the reaction (2R)-2-phosphoglycerate = phosphoenolpyruvate + H2O. The protein operates within carbohydrate degradation; glycolysis; pyruvate from D-glyceraldehyde 3-phosphate: step 4/5. Functionally, catalyzes the reversible conversion of 2-phosphoglycerate (2-PG) into phosphoenolpyruvate (PEP). It is essential for the degradation of carbohydrates via glycolysis. This chain is Enolase, found in Shewanella frigidimarina (strain NCIMB 400).